Consider the following 103-residue polypeptide: Glycoprotein 24B (103 aa).

It belongs to the csb family. In terms of processing, O-glycosylated.

The protein localises to the cell surface. Its function is as follows. Cell-cell adhesion during early development. The polypeptide is Glycoprotein 24B (csbB) (Dictyostelium discoideum (Social amoeba)).